We begin with the raw amino-acid sequence, 278 residues long: Urease accessory protein UreD (278 aa).

The protein belongs to the UreD family. UreD, UreF and UreG form a complex that acts as a GTP-hydrolysis-dependent molecular chaperone, activating the urease apoprotein by helping to assemble the nickel containing metallocenter of UreC. The UreE protein probably delivers the nickel.

It is found in the cytoplasm. Functionally, required for maturation of urease via the functional incorporation of the urease nickel metallocenter. This Leptothrix cholodnii (strain ATCC 51168 / LMG 8142 / SP-6) (Leptothrix discophora (strain SP-6)) protein is Urease accessory protein UreD.